Reading from the N-terminus, the 154-residue chain is Myoglobin (154 aa).

Residues 2–148 form the Globin domain; the sequence is VLSEGEWQLV…FRKDIAAKYK (147 aa). Phosphoserine is present on S4. H65 contributes to the nitrite binding site. O2 is bound at residue H65. The residue at position 68 (T68) is a Phosphothreonine. H94 is a heme b binding site.

The protein belongs to the globin family. As to quaternary structure, monomeric.

It localises to the cytoplasm. It is found in the sarcoplasm. It carries out the reaction Fe(III)-heme b-[protein] + nitric oxide + H2O = Fe(II)-heme b-[protein] + nitrite + 2 H(+). It catalyses the reaction H2O2 + AH2 = A + 2 H2O. Monomeric heme protein which primary function is to store oxygen and facilitate its diffusion within muscle tissues. Reversibly binds oxygen through a pentacoordinated heme iron and enables its timely and efficient release as needed during periods of heightened demand. Depending on the oxidative conditions of tissues and cells, and in addition to its ability to bind oxygen, it also has a nitrite reductase activity whereby it regulates the production of bioactive nitric oxide. Under stress conditions, like hypoxia and anoxia, it also protects cells against reactive oxygen species thanks to its pseudoperoxidase activity. In Physeter macrocephalus (Sperm whale), this protein is Myoglobin (MB).